A 327-amino-acid chain; its full sequence is Probable cell division protein WhiA (327 aa).

Positions 275-308 form a DNA-binding region, H-T-H motif; the sequence is SLEELGRLADPPMTKDAVAGRIRRLLSMADRKAK.

Belongs to the WhiA family.

Its function is as follows. Involved in cell division and chromosome segregation. The polypeptide is Probable cell division protein WhiA (Mycobacterium leprae (strain Br4923)).